A 739-amino-acid chain; its full sequence is Adenosylcobalamin-dependent ribonucleoside-triphosphate reductase (739 aa).

Cys-119 and Cys-419 are oxidised to a cystine. The interval 147 to 158 (SMPFSFLFDELM) is effector region-1. The segment at 168 to 313 (ARSNISQIPR…ICNLIGKAVV (146 aa)) is effector region-2. Active-site residues include Cys-408 and Glu-410. Residues 565-626 (FHYGAYLIQR…NPNFASAGTV (62 aa)) form an adenosylcobalamin-binding-1 region. The segment at 685-724 (LQQAPKEPIDKETYEKRSQEITGNVEEVFSQLNSDVKDLE) is adenosylcobalamin-binding-2.

It belongs to the class II ribonucleoside-triphosphate reductase family. Monomer. Adenosylcob(III)alamin is required as a cofactor.

The catalysed reaction is a 2'-deoxyribonucleoside 5'-triphosphate + [thioredoxin]-disulfide + H2O = a ribonucleoside 5'-triphosphate + [thioredoxin]-dithiol. Its activity is regulated as follows. Allosterically regulated by ATP and dNTP. The polypeptide is Adenosylcobalamin-dependent ribonucleoside-triphosphate reductase (rtpR) (Lactobacillus delbrueckii subsp. bulgaricus (strain ATCC BAA-365 / Lb-18)).